Here is a 647-residue protein sequence, read N- to C-terminus: DNA ligase (647 aa).

NAD(+) is bound by residues 30-34 (DEEYD), 79-80 (SM), and glutamate 106. Lysine 108 (N6-AMP-lysine intermediate) is an active-site residue. 3 residues coordinate NAD(+): arginine 129, glutamate 163, and lysine 301. Zn(2+) is bound by residues cysteine 395, cysteine 398, cysteine 411, and cysteine 416. One can recognise a BRCT domain in the interval 569-647 (SISNALSGKT…SEYERLKLEV (79 aa)).

This sequence belongs to the NAD-dependent DNA ligase family. LigA subfamily. Requires Mg(2+) as cofactor. Mn(2+) serves as cofactor.

It carries out the reaction NAD(+) + (deoxyribonucleotide)n-3'-hydroxyl + 5'-phospho-(deoxyribonucleotide)m = (deoxyribonucleotide)n+m + AMP + beta-nicotinamide D-nucleotide.. DNA ligase that catalyzes the formation of phosphodiester linkages between 5'-phosphoryl and 3'-hydroxyl groups in double-stranded DNA using NAD as a coenzyme and as the energy source for the reaction. It is essential for DNA replication and repair of damaged DNA. The chain is DNA ligase from Campylobacter concisus (strain 13826).